We begin with the raw amino-acid sequence, 230 residues long: uncharacterized protein (230 aa).

One can recognise an S4 RNA-binding domain in the interval 2 to 69 (HRLAKIISNA…KPRLWIYYKP (68 aa)). Asp102 (nucleophile) is an active-site residue.

The protein belongs to the pseudouridine synthase RsuA family.

It carries out the reaction a uridine in RNA = a pseudouridine in RNA. This is an uncharacterized protein from Rickettsia conorii (strain ATCC VR-613 / Malish 7).